Consider the following 259-residue polypeptide: Protein snail homolog Sna (259 aa).

The segment at 1-20 (MPRSFLVKKHFSASKKPNYS) is SNAG domain. The segment at 71 to 113 (DYKKSPISPSSSDDSSKPLDLTSFSSEDEGGKTSDPPSPASSA) is disordered. 5 C2H2-type zinc fingers span residues 119–141 (FQCNLCSKSYSTFAGLSKHKQLH), 150–172 (FSCKYCEKEYVSLGALKMHIRSH), 176–198 (CVCKICGKAFSRPWLLQGHIRTH), 204–226 (FSCTHCNRAFADRSNLRAHLQTH), and 232–255 (YQCKSCSRTFSRMSLLHKHEETGC).

The protein belongs to the snail C2H2-type zinc-finger protein family. Interacts (via SNAG domain) with limd1 (via LIM domains), wtip (via LIM domains) and ajuba (via LIM domains). Interacts with elp3; the interaction inhibits snai1 ubiquitination and promotes snai1 stability. Post-translationally, ubiquitinated. In terms of tissue distribution, maternal expression is nearly completely restricted to the vegetal hemisphere. Zygotic expression begins in the dorsal marginal zone just before gastrulation (stage 9), and is almost completely absent in the animal hemisphere. At mid-gastrula (stage 11-11.5), expression begins in the ectoderm in an arc surrounding the prospective neural plate. From stage 12, anterior expression is down-regulated, while levels are increased in the prospective neural crest.

The protein resides in the nucleus. Its function is as follows. Transcriptional repressor. Acts upstream of snai2/slug, zic5 and other neural crest markers in the specification of the neural crest and neural crest migration. Involved in embryonic mesoderm formation. The sequence is that of Protein snail homolog Sna (snai1) from Xenopus laevis (African clawed frog).